We begin with the raw amino-acid sequence, 328 residues long: Malate dehydrogenase (328 aa).

11 to 17 (GAAGQIG) serves as a coordination point for NAD(+). The substrate site is built by Arg-94 and Arg-100. NAD(+) contacts are provided by residues Asn-107, Gln-114, and 131-133 (VGN). Substrate is bound by residues Asn-133 and Arg-164. Residue His-189 is the Proton acceptor of the active site.

It belongs to the LDH/MDH superfamily. MDH type 2 family.

It catalyses the reaction (S)-malate + NAD(+) = oxaloacetate + NADH + H(+). Catalyzes the reversible oxidation of malate to oxaloacetate. This Xylella fastidiosa (strain 9a5c) protein is Malate dehydrogenase.